A 71-amino-acid chain; its full sequence is MSKGKIEIIETCCRRCGKSIRTLSHTIIGADDAREKFGSICGGCITPEEDNELTEMLLAAAVRRMSGATLQ.

Residues 9–28 (IETCCRRCGKSIRTLSHTII) constitute a DNA-binding region (H-T-H motif).

This is Protein KleB (kleB) from Escherichia coli.